Consider the following 79-residue polypeptide: MSLTVKCPTCQTPVTWNAEAEFKPFCSERCKLIDLGDWASEKNAIPVKPEFAPELLDQLGYDDADFFLDNNPFEDDKNR.

The Zn(2+) site is built by cysteine 7, cysteine 10, cysteine 26, and cysteine 30.

It belongs to the DNA gyrase inhibitor YacG family. In terms of assembly, interacts with GyrB. Zn(2+) is required as a cofactor.

Functionally, inhibits all the catalytic activities of DNA gyrase by preventing its interaction with DNA. Acts by binding directly to the C-terminal domain of GyrB, which probably disrupts DNA binding by the gyrase. The protein is DNA gyrase inhibitor YacG of Shewanella pealeana (strain ATCC 700345 / ANG-SQ1).